A 295-amino-acid chain; its full sequence is Probable protein phosphatase 2C 5 (295 aa).

One can recognise a PPM-type phosphatase domain in the interval 23–294 (QYAATHMQGW…DNMTCILVLF (272 aa)). The Mn(2+) site is built by aspartate 57 and glycine 58. The interval 151-170 (NRDGKPFDMSKDHKPDDDQE) is disordered. Positions 237 and 285 each coordinate Mn(2+).

The protein belongs to the PP2C family. It depends on Mg(2+) as a cofactor. Requires Mn(2+) as cofactor.

Its subcellular location is the membrane. It carries out the reaction O-phospho-L-seryl-[protein] + H2O = L-seryl-[protein] + phosphate. The enzyme catalyses O-phospho-L-threonyl-[protein] + H2O = L-threonyl-[protein] + phosphate. Functionally, enzyme with a broad specificity. This is Probable protein phosphatase 2C 5 from Paramecium tetraurelia.